The following is a 349-amino-acid chain: Increased DNA methylation 2 (349 aa).

The interval 210 to 230 (EDNAGTCTSGEESDVAAKPEV) is disordered. A sHSP domain is found at 233-349 (EAHGGLMVGL…VMKNLQKQTV (117 aa)).

Belongs to the small heat shock protein (HSP20) family. In terms of assembly, homodimer or oligomer. May form an 16-mer complex. Interacts with MBD7 (via C-terminus). Interacts with IDM1 (via N-terminus). Interacts with IMD3. Part of a complex made of MBD7, IDM1, IDM2, IDM3 and ROS1. As to expression, expressed in cotyledons and hypocotyls in young seedlings.

The protein localises to the nucleus. It localises to the nucleoplasm. Its function is as follows. Prevents DNA hypermethylation and transcriptional silencing of transgenes and of some endogenous genes. May act as a molecular chaperone of IDM1, regulating its H3K18 acetylation activity. The chain is Increased DNA methylation 2 from Arabidopsis thaliana (Mouse-ear cress).